The primary structure comprises 197 residues: Ubiquitin-conjugating enzyme E2 T (197 aa).

The 151-residue stretch at 2 to 152 (QRASRLKREL…ARQWTEKHAR (151 aa)) folds into the UBC core domain. Residue cysteine 86 is the Glycyl thioester intermediate of the active site. Glycyl lysine isopeptide (Lys-Gly) (interchain with G-Cter in ubiquitin) cross-links involve residues lysine 91 and lysine 182. The tract at residues 149-197 (KHARQKQKADEEEMLDNLPEAGDSRVHNSTQKRKASQLVGIEKKFHPDV) is disordered. Phosphoserine is present on serine 184. Residues lysine 191 and lysine 192 each participate in a glycyl lysine isopeptide (Lys-Gly) (interchain with G-Cter in SUMO2) cross-link.

The protein belongs to the ubiquitin-conjugating enzyme family. As to quaternary structure, directly interacts with FANCL. Interacts with BRCA1. Post-translationally, auto-ubiquitinated. Effects of auto-monoubiquitination at Lys-91 and Lys-182 are unclear: according to a report, monoubiquitination inactivates E2 enzyme activity. In contrast, according to another report, autoubiquitination does not affect E2 enzyme activity.

Its subcellular location is the nucleus. It carries out the reaction S-ubiquitinyl-[E1 ubiquitin-activating enzyme]-L-cysteine + [E2 ubiquitin-conjugating enzyme]-L-cysteine = [E1 ubiquitin-activating enzyme]-L-cysteine + S-ubiquitinyl-[E2 ubiquitin-conjugating enzyme]-L-cysteine.. It functions in the pathway protein modification; protein ubiquitination. Accepts ubiquitin from the E1 complex and catalyzes its covalent attachment to other proteins. Catalyzes monoubiquitination. Involved in mitomycin-C (MMC)-induced DNA repair. Acts as a specific E2 ubiquitin-conjugating enzyme for the Fanconi anemia complex by associating with E3 ubiquitin-protein ligase FANCL and catalyzing monoubiquitination of FANCD2, a key step in the DNA damage pathway. Also mediates monoubiquitination of FANCL and FANCI. May contribute to ubiquitination and degradation of BRCA1. In vitro able to promote polyubiquitination using all 7 ubiquitin Lys residues, but may prefer 'Lys-11'-, 'Lys-27'-, 'Lys-48'- and 'Lys-63'-linked polyubiquitination. In Homo sapiens (Human), this protein is Ubiquitin-conjugating enzyme E2 T (UBE2T).